Reading from the N-terminus, the 565-residue chain is NAD-dependent malic enzyme (565 aa).

Catalysis depends on tyrosine 104, which acts as the Proton donor. Arginine 157 provides a ligand contact to NAD(+). Lysine 175 functions as the Proton acceptor in the catalytic mechanism. 3 residues coordinate a divalent metal cation: glutamate 246, aspartate 247, and aspartate 270. NAD(+) contacts are provided by aspartate 270 and asparagine 418.

It belongs to the malic enzymes family. As to quaternary structure, homotetramer. Mg(2+) is required as a cofactor. Mn(2+) serves as cofactor.

It catalyses the reaction (S)-malate + NAD(+) = pyruvate + CO2 + NADH. The enzyme catalyses oxaloacetate + H(+) = pyruvate + CO2. In Erwinia tasmaniensis (strain DSM 17950 / CFBP 7177 / CIP 109463 / NCPPB 4357 / Et1/99), this protein is NAD-dependent malic enzyme.